Reading from the N-terminus, the 490-residue chain is MGIRVRYAPSPTGLQHIGGIRTALFNYFFAKSCGGKFLLRIEDTDQSRYFSEAENDLYSSLKWLGISFDEGPVVGGDYAPYVQSQRSAIYKRYAEYLIESGHAYYCYCSPERLERIKKIQNINKMPPGYDRHCRNLSDEEIENVLIKKIKPVVRFKIPLEGDTSFDDVLLGKITWSNKDISPDPVILKSDGLPTYHLANVVDDYLMKITHVLRAQEWVSSGPLHTLLYKAFKWNPPIYCHLPMVMGNDGQKLSKRHGSTALRQFIEDGYLPEAIINYITLLGWSYDDKREFFSKSDLEKFFSIEKINKSPAIFDYHKLDFFNSYYIREKKDEDLFNLLLPFFQKKGYVSKPNTLEESQKLKLLVPLIKSRIKKLSDALSMTKFFYEDIKSWNLDEFLGRKKTAKEVCSILELIKPILEGFEKRSLEENDKIFYDFAKNNGFKLGEILLPIRIAVLGSKVSPPLFDSLKLIGKSKVFERNKLAQEFLRINE.

The 'HIGH' region motif lies at 9 to 19 (PSPTGLQHIGG). The 'KMSKS' region motif lies at 251 to 255 (KLSKR). Lys254 is a binding site for ATP.

It belongs to the class-I aminoacyl-tRNA synthetase family. Glutamate--tRNA ligase type 1 subfamily. As to quaternary structure, monomer.

The protein resides in the cytoplasm. The catalysed reaction is tRNA(Glu) + L-glutamate + ATP = L-glutamyl-tRNA(Glu) + AMP + diphosphate. Its function is as follows. Catalyzes the attachment of glutamate to tRNA(Glu) in a two-step reaction: glutamate is first activated by ATP to form Glu-AMP and then transferred to the acceptor end of tRNA(Glu). The chain is Glutamate--tRNA ligase from Borreliella afzelii (strain PKo) (Borrelia afzelii).